The following is a 352-amino-acid chain: Heat-inducible transcription repressor HrcA (352 aa).

The protein belongs to the HrcA family.

Its function is as follows. Negative regulator of class I heat shock genes (grpE-dnaK-dnaJ and groELS operons). Prevents heat-shock induction of these operons. This is Heat-inducible transcription repressor HrcA from Latilactobacillus sakei subsp. sakei (strain 23K) (Lactobacillus sakei subsp. sakei).